A 227-amino-acid polypeptide reads, in one-letter code: UPF0173 metal-dependent hydrolase BALH_4194 (227 aa).

Belongs to the UPF0173 family.

This is UPF0173 metal-dependent hydrolase BALH_4194 from Bacillus thuringiensis (strain Al Hakam).